A 153-amino-acid polypeptide reads, in one-letter code: Probable phospholipase A2 homolog 2 (153 aa).

A signal peptide spans 1–25 (MRFFLKLAPRCSVLLLLLLVTASRG). 6 cysteine pairs are disulfide-bonded: cysteine 42–cysteine 70, cysteine 46–cysteine 76, cysteine 51–cysteine 123, cysteine 63–cysteine 83, cysteine 82–cysteine 109, and cysteine 89–cysteine 102. 3 residues coordinate Ca(2+): tyrosine 62, glycine 64, and tyrosine 67. The active site involves histidine 86. Residue aspartate 87 participates in Ca(2+) binding.

It belongs to the phospholipase A2 family. Ca(2+) serves as cofactor.

The protein localises to the secreted. It carries out the reaction a 1,2-diacyl-sn-glycero-3-phosphocholine + H2O = a 1-acyl-sn-glycero-3-phosphocholine + a fatty acid + H(+). PA2 catalyzes the calcium-dependent hydrolysis of the 2-acyl groups in 3-sn-phosphoglycerides. Releases lysophospholipids (LPLs) and free fatty acids (FFAs) from membrane phospholipids in response to hormones and other external stimuli. This is Probable phospholipase A2 homolog 2 (PLA2-II) from Oryza sativa subsp. japonica (Rice).